The sequence spans 688 residues: Glycine--tRNA ligase beta subunit (688 aa).

This sequence belongs to the class-II aminoacyl-tRNA synthetase family. As to quaternary structure, tetramer of two alpha and two beta subunits.

The protein localises to the cytoplasm. The enzyme catalyses tRNA(Gly) + glycine + ATP = glycyl-tRNA(Gly) + AMP + diphosphate. The polypeptide is Glycine--tRNA ligase beta subunit (Listeria welshimeri serovar 6b (strain ATCC 35897 / DSM 20650 / CCUG 15529 / CIP 8149 / NCTC 11857 / SLCC 5334 / V8)).